A 79-amino-acid polypeptide reads, in one-letter code: Delta-hormotoxin-Cpt1a (79 aa).

The signal sequence occupies residues 1–20; that stretch reads MKTQVLAVFVLCVLFCLAES. A propeptide spanning residues 21–31 is cleaved from the precursor; sequence RTTLNKRIDIA. Disulfide bonds link Cys-36–Cys-75, Cys-38–Cys-66, and Cys-56–Cys-76.

It belongs to the sea anemone sodium channel inhibitory toxin family.

It localises to the secreted. The protein resides in the nematocyst. In neuromuscular preparation of crustaceans, the toxin increased neurotransmitter release, causing repetitive firing of the axons. May affect sodium channels (Nav). The sequence is that of Delta-hormotoxin-Cpt1a from Calliactis parasitica (Sea anemone).